The sequence spans 136 residues: ATP synthase epsilon chain 2 (136 aa).

Belongs to the ATPase epsilon chain family. As to quaternary structure, F-type ATPases have 2 components, CF(1) - the catalytic core - and CF(0) - the membrane proton channel. CF(1) has five subunits: alpha(3), beta(3), gamma(1), delta(1), epsilon(1). CF(0) has three main subunits: a, b and c.

The protein localises to the cell inner membrane. In terms of biological role, produces ATP from ADP in the presence of a proton gradient across the membrane. The chain is ATP synthase epsilon chain 2 from Nitrobacter hamburgensis (strain DSM 10229 / NCIMB 13809 / X14).